The following is a 261-amino-acid chain: Cytochrome c oxidase subunit 3 (261 aa).

Topologically, residues 1-15 (MTHQTHAYHMVNPSP) are mitochondrial matrix. Residues 16-34 (WPLTGALSALLMTSGLIMW) traverse the membrane as a helical segment. Residues 35–40 (FHFNSV) lie on the Mitochondrial intermembrane side of the membrane. The chain crosses the membrane as a helical span at residues 41-66 (ALLTLGLTTNMLTMYQWWRDVIREST). Residues 67–72 (FQGHHT) lie on the Mitochondrial matrix side of the membrane. A helical transmembrane segment spans residues 73–105 (PNVQKGLRYGMILFIISEVLFFTGFFWAFYHSS). The Mitochondrial intermembrane portion of the chain corresponds to 106-128 (LAPTPELGGCWPPTGIHPLNPLE). A helical transmembrane segment spans residues 129-152 (VPLLNTSVLLASGVSITWAHHSLM). Topologically, residues 153–155 (EGN) are mitochondrial matrix. The helical transmembrane segment at 156-183 (RNHMLQALFITIALGVYFTLLQASEYYE) threads the bilayer. Residues 184-190 (APFTISD) are Mitochondrial intermembrane-facing. Residues 191-223 (GVYGSTFFVATGFHGLHVIIGSTFLIVCFFRQL) traverse the membrane as a helical segment. Topologically, residues 224–232 (KFHFTSSHH) are mitochondrial matrix. A helical membrane pass occupies residues 233–256 (FGFEAAAWYWHFVDVVWLFLYVSI). Residues 257 to 261 (YWWGS) are Mitochondrial intermembrane-facing.

It belongs to the cytochrome c oxidase subunit 3 family. In terms of assembly, component of the cytochrome c oxidase (complex IV, CIV), a multisubunit enzyme composed of 14 subunits. The complex is composed of a catalytic core of 3 subunits MT-CO1, MT-CO2 and MT-CO3, encoded in the mitochondrial DNA, and 11 supernumerary subunits COX4I, COX5A, COX5B, COX6A, COX6B, COX6C, COX7A, COX7B, COX7C, COX8 and NDUFA4, which are encoded in the nuclear genome. The complex exists as a monomer or a dimer and forms supercomplexes (SCs) in the inner mitochondrial membrane with NADH-ubiquinone oxidoreductase (complex I, CI) and ubiquinol-cytochrome c oxidoreductase (cytochrome b-c1 complex, complex III, CIII), resulting in different assemblies (supercomplex SCI(1)III(2)IV(1) and megacomplex MCI(2)III(2)IV(2)).

It is found in the mitochondrion inner membrane. The enzyme catalyses 4 Fe(II)-[cytochrome c] + O2 + 8 H(+)(in) = 4 Fe(III)-[cytochrome c] + 2 H2O + 4 H(+)(out). Component of the cytochrome c oxidase, the last enzyme in the mitochondrial electron transport chain which drives oxidative phosphorylation. The respiratory chain contains 3 multisubunit complexes succinate dehydrogenase (complex II, CII), ubiquinol-cytochrome c oxidoreductase (cytochrome b-c1 complex, complex III, CIII) and cytochrome c oxidase (complex IV, CIV), that cooperate to transfer electrons derived from NADH and succinate to molecular oxygen, creating an electrochemical gradient over the inner membrane that drives transmembrane transport and the ATP synthase. Cytochrome c oxidase is the component of the respiratory chain that catalyzes the reduction of oxygen to water. Electrons originating from reduced cytochrome c in the intermembrane space (IMS) are transferred via the dinuclear copper A center (CU(A)) of subunit 2 and heme A of subunit 1 to the active site in subunit 1, a binuclear center (BNC) formed by heme A3 and copper B (CU(B)). The BNC reduces molecular oxygen to 2 water molecules using 4 electrons from cytochrome c in the IMS and 4 protons from the mitochondrial matrix. The protein is Cytochrome c oxidase subunit 3 (MT-CO3) of Nanger dama (Dama gazelle).